The sequence spans 651 residues: DNA mismatch repair protein MutL (651 aa).

The interval 383–405 (TAAEEPTPAPTSPDLEIGDLDDQ) is disordered.

The protein belongs to the DNA mismatch repair MutL/HexB family.

Functionally, this protein is involved in the repair of mismatches in DNA. It is required for dam-dependent methyl-directed DNA mismatch repair. May act as a 'molecular matchmaker', a protein that promotes the formation of a stable complex between two or more DNA-binding proteins in an ATP-dependent manner without itself being part of a final effector complex. The sequence is that of DNA mismatch repair protein MutL from Lacticaseibacillus casei (strain BL23) (Lactobacillus casei).